A 678-amino-acid chain; its full sequence is Protein CASP (678 aa).

Residues 1–619 are Cytoplasmic-facing; that stretch reads MAANVGSMSQ…LILSNKTART (619 aa). Coiled-coil stretches lie at residues 16–40, 67–374, 427–454, and 502–556; these read DLQQ…ESEQ, LLKS…TLKS, HLTE…TIQS, and LSII…FLQS. Position 586 is a phosphoserine (S586). The chain crosses the membrane as a helical; Anchor for type IV membrane protein span at residues 620 to 640; it reads IGFFYTLFLHCLVFLVLYKLA. Over 641–678 the chain is Lumenal; that stretch reads WSESVERDCAATCAKKFADHLHKFHESDNGAAAGDLWQ.

Belongs to the CASP family. As to quaternary structure, homodimer; disulfide-linked. Interacts with GOLGA5. As to expression, ubiquitously expressed.

The protein localises to the golgi apparatus membrane. May be involved in intra-Golgi retrograde transport. The sequence is that of Protein CASP (Cux1) from Mus musculus (Mouse).